Reading from the N-terminus, the 189-residue chain is dCTP deaminase (189 aa).

DCTP is bound by residues 112 to 117 (KSTYAR), 136 to 138 (TLE), Gln157, Tyr171, and Gln181. Glu138 (proton donor/acceptor) is an active-site residue.

It belongs to the dCTP deaminase family. In terms of assembly, homotrimer.

The enzyme catalyses dCTP + H2O + H(+) = dUTP + NH4(+). The protein operates within pyrimidine metabolism; dUMP biosynthesis; dUMP from dCTP (dUTP route): step 1/2. Catalyzes the deamination of dCTP to dUTP. This is dCTP deaminase from Burkholderia thailandensis (strain ATCC 700388 / DSM 13276 / CCUG 48851 / CIP 106301 / E264).